The chain runs to 145 residues: 3-dehydroquinate dehydratase (145 aa).

Residue Tyr-22 is the Proton acceptor of the active site. Substrate is bound by residues Asn-71, His-77, and Asp-84. His-97 acts as the Proton donor in catalysis. Substrate is bound by residues 98-99 and Arg-108; that span reads IS.

Belongs to the type-II 3-dehydroquinase family. Homododecamer.

It carries out the reaction 3-dehydroquinate = 3-dehydroshikimate + H2O. The protein operates within metabolic intermediate biosynthesis; chorismate biosynthesis; chorismate from D-erythrose 4-phosphate and phosphoenolpyruvate: step 3/7. Functionally, catalyzes a trans-dehydration via an enolate intermediate. The protein is 3-dehydroquinate dehydratase of Thermotoga neapolitana (strain ATCC 49049 / DSM 4359 / NBRC 107923 / NS-E).